A 133-amino-acid polypeptide reads, in one-letter code: Alcohol dehydrogenase, 15 kDa subunit (133 aa).

A signal peptide spans 1-24 (MFRRIVPVLGLALGLGLASQAAMA). Residues 23-43 (MAQEQSPPPPPAVQGTPGKDF) are disordered. At Gln-25 the chain carries Pyrrolidone carboxylic acid.

In terms of assembly, the alcohol dehydrogenase multicomponent enzyme system is composed of a dehydrogenase subunit I (AdhA), a cytochrome c subunit II (AdhB) and a subunit III (AdhS).

It is found in the cell membrane. Functionally, part of the alcohol dehydrogenase multicomponent enzyme system which is involved in the production of acetic acid and in the ethanol oxidase respiratory chain. Does not play an obligatory role for the alcohol dehydrogenase (ADH) activity. The protein is Alcohol dehydrogenase, 15 kDa subunit of Gluconobacter oxydans (strain 621H) (Gluconobacter suboxydans).